Consider the following 265-residue polypeptide: UDP-N-acetylenolpyruvoylglucosamine reductase (265 aa).

One can recognise an FAD-binding PCMH-type domain in the interval 15–169 (GVGGPAELWT…TRVRLKLKER (155 aa)). Residue Arg149 is part of the active site. Residues 182 to 203 (DRARKGQPKRKSAGCAFKNPPG) are disordered. The active-site Proton donor is Cys196.

Belongs to the MurB family. The cofactor is FAD.

The protein resides in the cytoplasm. It carries out the reaction UDP-N-acetyl-alpha-D-muramate + NADP(+) = UDP-N-acetyl-3-O-(1-carboxyvinyl)-alpha-D-glucosamine + NADPH + H(+). Its pathway is cell wall biogenesis; peptidoglycan biosynthesis. Functionally, cell wall formation. This chain is UDP-N-acetylenolpyruvoylglucosamine reductase, found in Thermus thermophilus (strain ATCC 27634 / DSM 579 / HB8).